A 267-amino-acid polypeptide reads, in one-letter code: Tryptophan synthase alpha chain (267 aa).

Active-site proton acceptor residues include Glu43 and Asp54.

The protein belongs to the TrpA family. As to quaternary structure, tetramer of two alpha and two beta chains.

It carries out the reaction (1S,2R)-1-C-(indol-3-yl)glycerol 3-phosphate + L-serine = D-glyceraldehyde 3-phosphate + L-tryptophan + H2O. Its pathway is amino-acid biosynthesis; L-tryptophan biosynthesis; L-tryptophan from chorismate: step 5/5. Functionally, the alpha subunit is responsible for the aldol cleavage of indoleglycerol phosphate to indole and glyceraldehyde 3-phosphate. This Bacillus subtilis subsp. natto protein is Tryptophan synthase alpha chain.